We begin with the raw amino-acid sequence, 793 residues long: Flavin carrier protein 1 (793 aa).

An N-terminal signal peptide occupies residues 1–21 (MQVLVTLWCLICTCLVLPVAA). At 22-163 (KKRTLTASSL…FFSNGKTVSQ (142 aa)) the chain is on the lumenal side. Residue N143 is glycosylated (N-linked (GlcNAc...) asparagine). A helical transmembrane segment spans residues 164–184 (IGVKWVTAVIAGIGLLTSAVL). Topologically, residues 185 to 194 (STFGNSTAAS) are cytoplasmic. Residues 195–215 (HISANTMSLFLYFQSVAVVAM) traverse the membrane as a helical segment. Residues 216–223 (QHVDSVPP) are Lumenal-facing. Residues 224-244 (IAAAWSENLAWSMGLIRITFM) form a helical membrane-spanning segment. The Cytoplasmic segment spans residues 245–249 (QKIFR). The chain crosses the membrane as a helical span at residues 250 to 272 (WYVEATGGSASLYLTATTMSVLT). The Lumenal segment spans residues 273-317 (QRGLDYLKNTSVYKRAENVLYGNSNTLIFRGIKRMGYRMKIENTA). An N-linked (GlcNAc...) asparagine glycan is attached at N281. The helical transmembrane segment at 318 to 338 (IVCTGFTFFVLCGYFLAGFIM) threads the bilayer. At 339-372 (ACKYSIELCIRCGWMRSDRFYQFRKNWRSVLKGS) the chain is on the cytoplasmic side. A helical membrane pass occupies residues 373–393 (LLRYIYIGFTQLTILSFWEFT). Residues 394 to 397 (ERDS) are Lumenal-facing. Residues 398–418 (AGVIVIACLFIVLSCGLMAWA) form a helical membrane-spanning segment. Residues 419–461 (AYRTIFFASKSVEMYNNPAALLYGDEYVLNKYGFFYTMFNAKH) are Cytoplasmic-facing. The helical transmembrane segment at 462-482 (YWWNALLTTYILVKALFVGFA) threads the bilayer. Residues 483–484 (QA) lie on the Lumenal side of the membrane. The helical transmembrane segment at 485–505 (SGKTQALAIFIIDLAYFVAII) threads the bilayer. Topologically, residues 506 to 516 (RYKPYLDRPTN) are cytoplasmic. Residues 517–537 (IVNIFICTVTLVNSFLFMFFS) traverse the membrane as a helical segment. The Lumenal portion of the chain corresponds to 538–551 (NLFNQKYAVSAIMG). A helical membrane pass occupies residues 552-572 (WVFFIMNAAFSLLLLLMILAF). Topologically, residues 573-793 (TTIILFSKNP…KANILDPDYL (221 aa)) are cytoplasmic. S610 is subject to Phosphoserine. At T626 the chain carries Phosphothreonine. Disordered regions lie at residues 649 to 674 (YDDE…PTFS) and 689 to 731 (KLGS…QESE). The span at 701-719 (ITQQEVSPDRASSSPNSKS) shows a compositional bias: polar residues. S771 and S774 each carry phosphoserine.

The protein belongs to the transient receptor potential (TRP) ion channel family.

It is found in the endoplasmic reticulum membrane. Its function is as follows. May be responsible for the transport of FAD into the endoplasmic reticulum lumen, where it is required for oxidative protein folding. The polypeptide is Flavin carrier protein 1 (FLC1) (Saccharomyces cerevisiae (strain ATCC 204508 / S288c) (Baker's yeast)).